The following is a 296-amino-acid chain: Chronophin (296 aa).

Asp-25 serves as the catalytic Nucleophile. 2 residues coordinate Mg(2+): Asp-25 and Asp-27. Residue Asp-27 is the Proton donor of the active site. Substrate-binding positions include 58 to 60, His-182, and Lys-213; that span reads SNN. Asp-238 lines the Mg(2+) pocket.

The protein belongs to the HAD-like hydrolase superfamily. As to quaternary structure, homodimer. Requires Mg(2+) as cofactor. As to expression, ubiquitously expressed (at protein level). Highly expressed in all the regions of central nerve system except the spinal cord. Also expressed at high level in liver and testis. In fetus, it is weakly expressed in all organs except brain.

It is found in the cytoplasm. It localises to the cytosol. Its subcellular location is the cytoskeleton. The protein resides in the cell projection. The protein localises to the ruffle membrane. It is found in the lamellipodium membrane. It localises to the cell membrane. The enzyme catalyses pyridoxal 5'-phosphate + H2O = pyridoxal + phosphate. The catalysed reaction is pyridoxine 5'-phosphate + H2O = pyridoxine + phosphate. It catalyses the reaction pyridoxamine + phosphate = pyridoxamine 5'-phosphate + H2O. It carries out the reaction O-phospho-L-seryl-[protein] + H2O = L-seryl-[protein] + phosphate. With respect to regulation, inhibited by NaF, Zn(2+), Ca(2+), Mn(2+) and EDTA. Functions as a pyridoxal phosphate (PLP) phosphatase, which also catalyzes the dephosphorylation of pyridoxine 5'-phosphate (PNP) and pyridoxamine 5'-phosphate (PMP), with order of substrate preference PLP &gt; PNP &gt; PMP and therefore plays a role in vitamin B6 metabolism. Also functions as a protein serine phosphatase that specifically dephosphorylates 'Ser-3' in proteins of the actin-depolymerizing factor (ADF)/cofilin family like CFL1 and DSTN. Thereby, regulates cofilin-dependent actin cytoskeleton reorganization, being required for normal progress through mitosis and normal cytokinesis. Does not dephosphorylate phosphothreonines in LIMK1. Does not dephosphorylate peptides containing phosphotyrosine. This chain is Chronophin, found in Homo sapiens (Human).